The chain runs to 295 residues: 4-diphosphocytidyl-2-C-methyl-D-erythritol kinase (295 aa).

Residue lysine 22 is part of the active site. Residue 106-116 coordinates ATP; it reads PAGGGFGGGSS. Aspartate 148 is a catalytic residue.

Belongs to the GHMP kinase family. IspE subfamily.

It carries out the reaction 4-CDP-2-C-methyl-D-erythritol + ATP = 4-CDP-2-C-methyl-D-erythritol 2-phosphate + ADP + H(+). It functions in the pathway isoprenoid biosynthesis; isopentenyl diphosphate biosynthesis via DXP pathway; isopentenyl diphosphate from 1-deoxy-D-xylulose 5-phosphate: step 3/6. Its function is as follows. Catalyzes the phosphorylation of the position 2 hydroxy group of 4-diphosphocytidyl-2C-methyl-D-erythritol. The protein is 4-diphosphocytidyl-2-C-methyl-D-erythritol kinase of Xanthomonas euvesicatoria pv. vesicatoria (strain 85-10) (Xanthomonas campestris pv. vesicatoria).